Consider the following 574-residue polypeptide: Arginine--tRNA ligase (574 aa).

The 'HIGH' region signature appears at 126 to 136 (PNIAKRMHVGH).

The protein belongs to the class-I aminoacyl-tRNA synthetase family. Monomer.

The protein localises to the cytoplasm. The enzyme catalyses tRNA(Arg) + L-arginine + ATP = L-arginyl-tRNA(Arg) + AMP + diphosphate. In Chloroflexus aggregans (strain MD-66 / DSM 9485), this protein is Arginine--tRNA ligase.